The following is a 232-amino-acid chain: Cytidylate kinase (232 aa).

19-27 (GPAGVGKTT) lines the ATP pocket.

Belongs to the cytidylate kinase family. Type 1 subfamily.

The protein resides in the cytoplasm. The enzyme catalyses CMP + ATP = CDP + ADP. It catalyses the reaction dCMP + ATP = dCDP + ADP. The chain is Cytidylate kinase from Nitratidesulfovibrio vulgaris (strain DP4) (Desulfovibrio vulgaris).